Here is a 185-residue protein sequence, read N- to C-terminus: NEDD8-conjugating enzyme UBE2F (185 aa).

M1 carries the N-acetylmethionine modification. The region spanning 32 to 185 (VRDKLLVKEV…VDEYIKRYAR (154 aa)) is the UBC core domain. C116 serves as the catalytic Glycyl thioester intermediate.

It belongs to the ubiquitin-conjugating enzyme family. UBE2F subfamily. As to quaternary structure, interacts with UBA3 and RBX2. Interacts (N-terminally acetylated form) with (via DCUN1 domain) DCUN1D1, DCUN1D2, DCUN1D3, DCUN1D4 and DCUN1D5. The acetylation of Met-1 increases affinity for DCUN1D3 by about 2 orders of magnitude and is crucial for NEDD8 transfer to cullins.

The enzyme catalyses [E1 NEDD8-activating enzyme]-S-[NEDD8 protein]-yl-L-cysteine + [E2 NEDD8-conjugating enzyme]-L-cysteine = [E1 NEDD8-activating enzyme]-L-cysteine + [E2 NEDD8-conjugating enzyme]-S-[NEDD8-protein]-yl-L-cysteine.. Its pathway is protein modification; protein neddylation. Functionally, accepts the ubiquitin-like protein NEDD8 from the UBA3-NAE1 E1 complex and catalyzes its covalent attachment to other proteins. Together with the E3 ubiquitin ligase RNF7/RBX2, specifically neddylates cullin-5 (CUL5). Does not neddylate CUL1, CUL2, CUL3, CUL4A or CUL4B. Mediates neddylation of the CUL9-RBX1 complex. The protein is NEDD8-conjugating enzyme UBE2F (Ube2f) of Rattus norvegicus (Rat).